A 266-amino-acid chain; its full sequence is Luciferase (266 aa).

The helical transmembrane segment at 22-41 (GLAVTCCAVAVASIIAFPYI) threads the bilayer.

It belongs to the fungal luciferase family.

The protein resides in the membrane. It carries out the reaction 3-hydroxyhispidin + O2 = (E)-caffeoylpyruvate + hnu + CO2. The enzyme catalyses 3-hydroxyhispidin + O2 = 4-[(E)-2-(3,4-dihydroxyphenyl)ethenyl]-1,7-dihydroxy-2,3,5-trioxabicyclo[2.2.2]oct-7-en-6-one. Its function is as follows. Luciferase; part of the gene cluster that mediates the fungal bioluminescence cycle. Uses the fungal luciferin 3-hydroxyhispidin as a substrate to produce an endoperoxide as a high-energy intermediate with decomposition that yields oxyluciferin (also known as caffeoylpyruvate) and light emission. The fungal bioluminescence cycle begins with the hispidin synthetase that catalyzes the formation of hispidin which is further hydroxylated by the hispidin-3-hydroxylase, yielding the fungal luciferin 3-hydroxyhispidin. The luciferase then produces an endoperoxide as a high-energy intermediate with decomposition that yields oxyluciferin and light emission. Oxyluciferin can be recycled to caffeic acid by caffeoylpyruvate hydrolase. The sequence is that of Luciferase from Armillaria mellea (Honey mushroom).